The following is a 213-amino-acid chain: Virulence factor 1 (213 aa).

Its subcellular location is the host mitochondrion. In terms of biological role, plays a role in antagonizing the host innate immune response. The chain is Virulence factor 1 from Norovirus (isolate Mouse/NoV/United States/MNV1/2002/GV) (MNV-1).